The following is a 320-amino-acid chain: Putative fatty acid elongase 3 (320 aa).

N14 is a glycosylation site (N-linked (GlcNAc...) asparagine). 6 consecutive transmembrane segments (helical) span residues 33–53, 67–87, 120–140, 145–165, 203–223, and 242–262; these read WMQN…AVIF, LDTP…LGFL, FWTE…IFIV, PLIF…WHAY, MAMV…IIGV, and LGLC…FFYH.

This sequence belongs to the ELO family.

The protein resides in the membrane. The catalysed reaction is a very-long-chain acyl-CoA + malonyl-CoA + H(+) = a very-long-chain 3-oxoacyl-CoA + CO2 + CoA. It functions in the pathway lipid metabolism; fatty acid biosynthesis. Could be implicated in synthesis of very long chain fatty acids. May be required for normally rapid growth. The chain is Putative fatty acid elongase 3 (elo-3) from Caenorhabditis elegans.